The following is a 213-amino-acid chain: Adenylate kinase (213 aa).

ATP is bound at residue 10-15 (GSGKGS). An NMP region spans residues 30 to 60 (STGNLFRAILKEDSELARKIKEINVSGGKLV). AMP-binding positions include Thr31, Arg36, 58–60 (KLV), 87–90 (GYPR), and Gln94. The tract at residues 123–160 (GRWMCPKCAGIYNIHFKKPQVDGVCDNDQATLYQRADD) is LID. ATP is bound at residue Arg124. Zn(2+) contacts are provided by Cys127 and Cys130. 133-134 (IY) serves as a coordination point for ATP. Zn(2+)-binding residues include Cys147 and Asp150. AMP contacts are provided by Arg157 and Arg168. Gln196 lines the ATP pocket.

Belongs to the adenylate kinase family. Monomer.

It localises to the cytoplasm. The catalysed reaction is AMP + ATP = 2 ADP. The protein operates within purine metabolism; AMP biosynthesis via salvage pathway; AMP from ADP: step 1/1. Its function is as follows. Catalyzes the reversible transfer of the terminal phosphate group between ATP and AMP. Plays an important role in cellular energy homeostasis and in adenine nucleotide metabolism. The protein is Adenylate kinase of Ureaplasma urealyticum serovar 10 (strain ATCC 33699 / Western).